A 549-amino-acid polypeptide reads, in one-letter code: Copalyl diphosphate synthase (549 aa).

The DXDDTA motif signature appears at 321 to 326; that stretch reads DADDTA. A QXXDGSW motif motif is present at residues 451–457; it reads QRDDGSW.

Belongs to the terpene synthase family. Mg(2+) is required as a cofactor.

The catalysed reaction is (2E,6E,10E)-geranylgeranyl diphosphate = (+)-copalyl diphosphate. In terms of biological role, involved in the biosynthesis of the labdane-type bicyclic diterpene labda-8(17),12(E),14-triene. Catalyzes the conversion of geranylgeranyl diphosphate (GGDP) into (+)-copalyl diphosphate. This chain is Copalyl diphosphate synthase, found in Streptomyces anulatus (Streptomyces chrysomallus).